The sequence spans 464 residues: ATP synthase subunit beta (464 aa).

Residue 151-158 coordinates ATP; that stretch reads GGAGVGKT.

This sequence belongs to the ATPase alpha/beta chains family. F-type ATPases have 2 components, CF(1) - the catalytic core - and CF(0) - the membrane proton channel. CF(1) has five subunits: alpha(3), beta(3), gamma(1), delta(1), epsilon(1). CF(0) has three main subunits: a(1), b(2) and c(9-12). The alpha and beta chains form an alternating ring which encloses part of the gamma chain. CF(1) is attached to CF(0) by a central stalk formed by the gamma and epsilon chains, while a peripheral stalk is formed by the delta and b chains.

It is found in the cell membrane. It carries out the reaction ATP + H2O + 4 H(+)(in) = ADP + phosphate + 5 H(+)(out). Produces ATP from ADP in the presence of a proton gradient across the membrane. The catalytic sites are hosted primarily by the beta subunits. In Clostridium kluyveri (strain ATCC 8527 / DSM 555 / NBRC 12016 / NCIMB 10680 / K1), this protein is ATP synthase subunit beta.